Reading from the N-terminus, the 258-residue chain is Indole-3-glycerol phosphate synthase (258 aa).

This sequence belongs to the TrpC family.

The enzyme catalyses 1-(2-carboxyphenylamino)-1-deoxy-D-ribulose 5-phosphate + H(+) = (1S,2R)-1-C-(indol-3-yl)glycerol 3-phosphate + CO2 + H2O. Its pathway is amino-acid biosynthesis; L-tryptophan biosynthesis; L-tryptophan from chorismate: step 4/5. In Chlorobium phaeovibrioides (strain DSM 265 / 1930) (Prosthecochloris vibrioformis (strain DSM 265)), this protein is Indole-3-glycerol phosphate synthase.